The chain runs to 98 residues: Cell division topological specificity factor (98 aa).

The protein belongs to the MinE family.

Functionally, prevents the cell division inhibition by proteins MinC and MinD at internal division sites while permitting inhibition at polar sites. This ensures cell division at the proper site by restricting the formation of a division septum at the midpoint of the long axis of the cell. This is Cell division topological specificity factor from Methylorubrum populi (strain ATCC BAA-705 / NCIMB 13946 / BJ001) (Methylobacterium populi).